Reading from the N-terminus, the 200-residue chain is NAD(P)H dehydrogenase (quinone) (200 aa).

The Flavodoxin-like domain occupies 4–191 (LLVLYYSMYG…TIARFQGEHV (188 aa)). FMN-binding positions include 10–15 (SMYGHV) and 79–81 (TRF). Tyr12 lines the NAD(+) pocket. Substrate is bound at residue Trp99. FMN contacts are provided by residues 114–120 (STASQHG) and His135.

It belongs to the WrbA family. Requires FMN as cofactor.

It catalyses the reaction a quinone + NADH + H(+) = a quinol + NAD(+). The catalysed reaction is a quinone + NADPH + H(+) = a quinol + NADP(+). The polypeptide is NAD(P)H dehydrogenase (quinone) (Nitrosococcus oceani (strain ATCC 19707 / BCRC 17464 / JCM 30415 / NCIMB 11848 / C-107)).